We begin with the raw amino-acid sequence, 502 residues long: Lysine--tRNA ligase (502 aa).

2 residues coordinate Mg(2+): glutamate 411 and glutamate 418.

It belongs to the class-II aminoacyl-tRNA synthetase family. As to quaternary structure, homodimer. Mg(2+) is required as a cofactor.

The protein localises to the cytoplasm. The catalysed reaction is tRNA(Lys) + L-lysine + ATP = L-lysyl-tRNA(Lys) + AMP + diphosphate. This is Lysine--tRNA ligase from Chromohalobacter salexigens (strain ATCC BAA-138 / DSM 3043 / CIP 106854 / NCIMB 13768 / 1H11).